Reading from the N-terminus, the 184-residue chain is Ribosome-recycling factor (184 aa).

Belongs to the RRF family.

The protein resides in the cytoplasm. In terms of biological role, responsible for the release of ribosomes from messenger RNA at the termination of protein biosynthesis. May increase the efficiency of translation by recycling ribosomes from one round of translation to another. In Caldicellulosiruptor saccharolyticus (strain ATCC 43494 / DSM 8903 / Tp8T 6331), this protein is Ribosome-recycling factor.